The chain runs to 471 residues: Alpha-1,3/1,6-mannosyltransferase alg-2 (471 aa).

N-linked (GlcNAc...) asparagine glycans are attached at residues Asn-178 and Asn-279. Residues 446 to 466 (GMILLVVGAAVAAVAGVISAV) traverse the membrane as a helical segment.

This sequence belongs to the glycosyltransferase group 1 family. Glycosyltransferase 4 subfamily.

The protein localises to the endoplasmic reticulum membrane. The enzyme catalyses a beta-D-Man-(1-&gt;4)-beta-D-GlcNAc-(1-&gt;4)-alpha-D-GlcNAc-diphospho-di-trans,poly-cis-dolichol + GDP-alpha-D-mannose = an alpha-D-Man-(1-&gt;3)-beta-D-Man-(1-&gt;4)-beta-D-GlcNAc-(1-&gt;4)-alpha-D-GlcNAc-diphospho-di-trans,poly-cis-dolichol + GDP + H(+). It carries out the reaction an alpha-D-Man-(1-&gt;3)-beta-D-Man-(1-&gt;4)-beta-D-GlcNAc-(1-&gt;4)-alpha-D-GlcNAc-diphospho-di-trans,poly-cis-dolichol + GDP-alpha-D-mannose = an alpha-D-Man-(1-&gt;3)-[alpha-D-Man-(1-&gt;6)]-beta-D-Man-(1-&gt;4)-beta-D-GlcNAc-(1-&gt;4)-alpha-D-GlcNAc-diphospho-di-trans,poly-cis-dolichol + GDP + H(+). The protein operates within protein modification; protein glycosylation. Mannosylates Man(2)GlcNAc(2)-dolichol diphosphate and Man(1)GlcNAc(2)-dolichol diphosphate to form Man(3)GlcNAc(2)-dolichol diphosphate. The sequence is that of Alpha-1,3/1,6-mannosyltransferase alg-2 (alg-2) from Neurospora crassa (strain ATCC 24698 / 74-OR23-1A / CBS 708.71 / DSM 1257 / FGSC 987).